A 346-amino-acid chain; its full sequence is Phenylalanine--tRNA ligase alpha subunit (346 aa).

Glu262 provides a ligand contact to Mg(2+).

It belongs to the class-II aminoacyl-tRNA synthetase family. Phe-tRNA synthetase alpha subunit type 1 subfamily. As to quaternary structure, tetramer of two alpha and two beta subunits. The cofactor is Mg(2+).

Its subcellular location is the cytoplasm. The catalysed reaction is tRNA(Phe) + L-phenylalanine + ATP = L-phenylalanyl-tRNA(Phe) + AMP + diphosphate + H(+). This is Phenylalanine--tRNA ligase alpha subunit from Ehrlichia chaffeensis (strain ATCC CRL-10679 / Arkansas).